The sequence spans 174 residues: Vimentin-type intermediate filament-associated coiled-coil protein (174 aa).

Residues 7–97 adopt a coiled-coil conformation; that stretch reads LQIREANAHL…DQRDQMIQQL (91 aa). The tract at residues 128–174 is disordered; the sequence is GPLPASHSHRAQLLPDGPGPPLGNNMGKEEGQDDQDDQQPAVFGTTV.

It is found in the cytoplasm. The polypeptide is Vimentin-type intermediate filament-associated coiled-coil protein (Vmac) (Mus musculus (Mouse)).